We begin with the raw amino-acid sequence, 241 residues long: MILFPAIDLKDGQCVRLRKGEMDQATVFNDSPADQAAAFALAGCRWIHVVDLNGAFAGRPVNAPAVEAILAAVDLPVQLGGGIRDLAAIDLWLDKGVRRVILGTVALRDPQLVREACKRHPGRIAVGIDARGGMVAVEGWAETSAVSALDLALRFEDAGVAAIVHTDIDRDGLLAGPNLDATAALAERLTTPVIVSGGVASLDDLRAIRARAAAGLEGVISGRALYDGRIDLAEALAVLAD.

Asp-8 functions as the Proton acceptor in the catalytic mechanism. The active-site Proton donor is the Asp-129.

Belongs to the HisA/HisF family.

Its subcellular location is the cytoplasm. The catalysed reaction is 1-(5-phospho-beta-D-ribosyl)-5-[(5-phospho-beta-D-ribosylamino)methylideneamino]imidazole-4-carboxamide = 5-[(5-phospho-1-deoxy-D-ribulos-1-ylimino)methylamino]-1-(5-phospho-beta-D-ribosyl)imidazole-4-carboxamide. Its pathway is amino-acid biosynthesis; L-histidine biosynthesis; L-histidine from 5-phospho-alpha-D-ribose 1-diphosphate: step 4/9. This Rhodospirillum rubrum (strain ATCC 11170 / ATH 1.1.1 / DSM 467 / LMG 4362 / NCIMB 8255 / S1) protein is 1-(5-phosphoribosyl)-5-[(5-phosphoribosylamino)methylideneamino] imidazole-4-carboxamide isomerase.